The sequence spans 144 residues: Small ribosomal subunit protein uS19 (144 aa).

The protein belongs to the universal ribosomal protein uS19 family.

Protein S19 forms a complex with S13 that binds strongly to the 16S ribosomal RNA. In Hyperthermus butylicus (strain DSM 5456 / JCM 9403 / PLM1-5), this protein is Small ribosomal subunit protein uS19.